The primary structure comprises 929 residues: Valine--tRNA ligase (929 aa).

A 'HIGH' region motif is present at residues 40 to 50 (PNVTGHLHMGH). The short motif at 522 to 526 (KMSKS) is the 'KMSKS' region element. Lys-525 lines the ATP pocket. A coiled-coil region spans residues 855–926 (LAGLIDKEAE…LEQQHAEITD (72 aa)).

Belongs to the class-I aminoacyl-tRNA synthetase family. ValS type 1 subfamily. In terms of assembly, monomer.

The protein resides in the cytoplasm. The enzyme catalyses tRNA(Val) + L-valine + ATP = L-valyl-tRNA(Val) + AMP + diphosphate. Its function is as follows. Catalyzes the attachment of valine to tRNA(Val). As ValRS can inadvertently accommodate and process structurally similar amino acids such as threonine, to avoid such errors, it has a 'posttransfer' editing activity that hydrolyzes mischarged Thr-tRNA(Val) in a tRNA-dependent manner. The sequence is that of Valine--tRNA ligase from Nitrosococcus oceani (strain ATCC 19707 / BCRC 17464 / JCM 30415 / NCIMB 11848 / C-107).